The chain runs to 132 residues: UPF0292 protein PH1700 (132 aa).

The Toprim domain occupies 20–100; it reads EGAIIVEGAR…KVDTETRREL (81 aa). Residues glutamate 26, aspartate 69, and aspartate 71 each coordinate Mg(2+).

This sequence belongs to the UPF0292 family. Requires Mg(2+) as cofactor.

This is UPF0292 protein PH1700 from Pyrococcus horikoshii (strain ATCC 700860 / DSM 12428 / JCM 9974 / NBRC 100139 / OT-3).